The sequence spans 749 residues: Polyribonucleotide nucleotidyltransferase (749 aa).

Positions 487 and 493 each coordinate Mg(2+). In terms of domain architecture, KH spans 554–613; the sequence is PSTTTIKIDKDKIRDIIGPGGKIIKEICETSGAKIDISDDGTVSVYASDRDKLKVALDKI. The S1 motif domain occupies 623–691; that stretch reads GEIFNGTVVK…NKGKAKLTIK (69 aa). The segment at 691-749 is disordered; it reads KNADKDKSSNNTKPKTNVNNTNKDNSEPEQRRDSSKKRAWNEDNNAETAEVITERKYFN. A compositionally biased stretch (low complexity) spans 699–713; that stretch reads SNNTKPKTNVNNTNK. Positions 714-723 are enriched in basic and acidic residues; the sequence is DNSEPEQRRD.

Belongs to the polyribonucleotide nucleotidyltransferase family. The cofactor is Mg(2+).

The protein resides in the cytoplasm. The enzyme catalyses RNA(n+1) + phosphate = RNA(n) + a ribonucleoside 5'-diphosphate. Functionally, involved in mRNA degradation. Catalyzes the phosphorolysis of single-stranded polyribonucleotides processively in the 3'- to 5'-direction. This chain is Polyribonucleotide nucleotidyltransferase, found in Rickettsia conorii (strain ATCC VR-613 / Malish 7).